The following is a 598-amino-acid chain: Pentatricopeptide repeat-containing protein At1g09900 (598 aa).

14 PPR repeats span residues 101–135 (EDVE…GNVP), 136–170 (DIIP…GAVP), 171–201 (DVIT…MSVS), 203–237 (DVVT…DCYP), 238–272 (DVIT…GCTP), 273–307 (DVVT…GCQP), 308–342 (NVIT…GFSP), 343–377 (SVVT…GCQP), 378–412 (NSLS…GCYP), 413–447 (DIVT…GCSP), 448–482 (VLIT…DLKP), 483–517 (DTIT…GIRP), 518–552 (NAVT…GCKP), and 553–587 (NETS…GLMK).

It belongs to the PPR family. P subfamily.

This is Pentatricopeptide repeat-containing protein At1g09900 from Arabidopsis thaliana (Mouse-ear cress).